The sequence spans 185 residues: HTH-type transcriptional regulator Hpr (185 aa).

The region spanning 13-157 (AMIFSQRIAQ…LIAILRNIYG (145 aa)) is the HTH marR-type domain. Positions 63-86 (ISEIAKFGVMHVSTAFNFSKKLEE) form a DNA-binding region, H-T-H motif.

As to quaternary structure, homodimer.

Functionally, negative regulator of protease production and sporulation. The polypeptide is HTH-type transcriptional regulator Hpr (Bacillus anthracis (strain CDC 684 / NRRL 3495)).